The primary structure comprises 339 residues: UDP-N-acetylenolpyruvoylglucosamine reductase (339 aa).

An FAD-binding PCMH-type domain is found at 19–189; it reads VDVQARLFAQ…LRVRFKLSRE (171 aa). Arg166 is a catalytic residue. Ser239 serves as the catalytic Proton donor. Glu335 is an active-site residue.

The protein belongs to the MurB family. The cofactor is FAD.

It localises to the cytoplasm. It carries out the reaction UDP-N-acetyl-alpha-D-muramate + NADP(+) = UDP-N-acetyl-3-O-(1-carboxyvinyl)-alpha-D-glucosamine + NADPH + H(+). It functions in the pathway cell wall biogenesis; peptidoglycan biosynthesis. Cell wall formation. The chain is UDP-N-acetylenolpyruvoylglucosamine reductase from Pseudomonas syringae pv. tomato (strain ATCC BAA-871 / DC3000).